Reading from the N-terminus, the 170-residue chain is Ubiquitin-conjugating enzyme E2 G1 (170 aa).

N-acetylmethionine is present on Met-1. Thr-2 carries the N-acetylthreonine; in Ubiquitin-conjugating enzyme E2 G1, N-terminally processed modification. In terms of domain architecture, UBC core spans 5-166 (QSALLLRRQL…VARCVRKSQE (162 aa)). Catalysis depends on Cys-90, which acts as the Glycyl thioester intermediate.

This sequence belongs to the ubiquitin-conjugating enzyme family. Autoubiquitinated in vitro. As to expression, widely expressed, mainly in skeletal muscle.

It carries out the reaction S-ubiquitinyl-[E1 ubiquitin-activating enzyme]-L-cysteine + [E2 ubiquitin-conjugating enzyme]-L-cysteine = [E1 ubiquitin-activating enzyme]-L-cysteine + S-ubiquitinyl-[E2 ubiquitin-conjugating enzyme]-L-cysteine.. It participates in protein modification; protein ubiquitination. Accepts ubiquitin from the E1 complex and catalyzes its covalent attachment to other proteins. In vitro catalyzes 'Lys-48'-, as well as 'Lys-63'-linked polyubiquitination. May be involved in degradation of muscle-specific proteins. Mediates polyubiquitination of CYP3A4. In Homo sapiens (Human), this protein is Ubiquitin-conjugating enzyme E2 G1 (UBE2G1).